Consider the following 352-residue polypeptide: Holliday junction branch migration complex subunit RuvB (352 aa).

Positions 5 to 191 (TDDFSEQRII…FGIVARLEFY (187 aa)) are large ATPase domain (RuvB-L). Residues leucine 30, arginine 31, glycine 72, lysine 75, threonine 76, threonine 77, 138–140 (EDY), arginine 181, tyrosine 191, and arginine 228 contribute to the ATP site. Threonine 76 lines the Mg(2+) pocket. Residues 192–262 (TPLELTKIVT…MADAALVMLD (71 aa)) are small ATPAse domain (RuvB-S). Residues 265 to 352 (PVGFDLMDRK…GPNGDLWAGQ (88 aa)) form a head domain (RuvB-H) region. Residues arginine 301, arginine 320, and arginine 325 each contribute to the DNA site.

This sequence belongs to the RuvB family. As to quaternary structure, homohexamer. Forms an RuvA(8)-RuvB(12)-Holliday junction (HJ) complex. HJ DNA is sandwiched between 2 RuvA tetramers; dsDNA enters through RuvA and exits via RuvB. An RuvB hexamer assembles on each DNA strand where it exits the tetramer. Each RuvB hexamer is contacted by two RuvA subunits (via domain III) on 2 adjacent RuvB subunits; this complex drives branch migration. In the full resolvosome a probable DNA-RuvA(4)-RuvB(12)-RuvC(2) complex forms which resolves the HJ.

Its subcellular location is the cytoplasm. The enzyme catalyses ATP + H2O = ADP + phosphate + H(+). In terms of biological role, the RuvA-RuvB-RuvC complex processes Holliday junction (HJ) DNA during genetic recombination and DNA repair, while the RuvA-RuvB complex plays an important role in the rescue of blocked DNA replication forks via replication fork reversal (RFR). RuvA specifically binds to HJ cruciform DNA, conferring on it an open structure. The RuvB hexamer acts as an ATP-dependent pump, pulling dsDNA into and through the RuvAB complex. RuvB forms 2 homohexamers on either side of HJ DNA bound by 1 or 2 RuvA tetramers; 4 subunits per hexamer contact DNA at a time. Coordinated motions by a converter formed by DNA-disengaged RuvB subunits stimulates ATP hydrolysis and nucleotide exchange. Immobilization of the converter enables RuvB to convert the ATP-contained energy into a lever motion, pulling 2 nucleotides of DNA out of the RuvA tetramer per ATP hydrolyzed, thus driving DNA branch migration. The RuvB motors rotate together with the DNA substrate, which together with the progressing nucleotide cycle form the mechanistic basis for DNA recombination by continuous HJ branch migration. Branch migration allows RuvC to scan DNA until it finds its consensus sequence, where it cleaves and resolves cruciform DNA. In Janthinobacterium sp. (strain Marseille) (Minibacterium massiliensis), this protein is Holliday junction branch migration complex subunit RuvB.